The primary structure comprises 99 residues: NADH-quinone oxidoreductase subunit K (99 aa).

The next 3 membrane-spanning stretches (helical) occupy residues 3-23 (PDNYLYLSALLFTIGAAGVLL), 28-48 (IVVFMCVELMLNAANLAFVAF), and 59-79 (VVAFFTMVVAACEVVIGLAII).

This sequence belongs to the complex I subunit 4L family. In terms of assembly, NDH-1 is composed of 14 different subunits. Subunits NuoA, H, J, K, L, M, N constitute the membrane sector of the complex.

The protein localises to the cell membrane. The enzyme catalyses a quinone + NADH + 5 H(+)(in) = a quinol + NAD(+) + 4 H(+)(out). Functionally, NDH-1 shuttles electrons from NADH, via FMN and iron-sulfur (Fe-S) centers, to quinones in the respiratory chain. The immediate electron acceptor for the enzyme in this species is believed to be a menaquinone. Couples the redox reaction to proton translocation (for every two electrons transferred, four hydrogen ions are translocated across the cytoplasmic membrane), and thus conserves the redox energy in a proton gradient. In Mycobacterium sp. (strain JLS), this protein is NADH-quinone oxidoreductase subunit K.